The following is a 497-amino-acid chain: Cytochrome P450 3A18 (497 aa).

Position 442 (Cys-442) interacts with heme.

Belongs to the cytochrome P450 family. It depends on heme as a cofactor.

It is found in the endoplasmic reticulum membrane. Its subcellular location is the microsome membrane. The enzyme catalyses an organic molecule + reduced [NADPH--hemoprotein reductase] + O2 = an alcohol + oxidized [NADPH--hemoprotein reductase] + H2O + H(+). Catalyzes 16-beta- and 6-alpha-hydroxylations of testosterone. The chain is Cytochrome P450 3A18 (Cyp3a18) from Rattus norvegicus (Rat).